Here is a 239-residue protein sequence, read N- to C-terminus: Ribosomal RNA small subunit methyltransferase G (239 aa).

Residues G77, F82, 128–129 (AE), and R147 each bind S-adenosyl-L-methionine. A disordered region spans residues 219–239 (KNTPKKYPRKPGTPNKSPIEG).

It belongs to the methyltransferase superfamily. RNA methyltransferase RsmG family.

Its subcellular location is the cytoplasm. Its function is as follows. Specifically methylates the N7 position of guanine in position 535 of 16S rRNA. The sequence is that of Ribosomal RNA small subunit methyltransferase G from Bacillus subtilis (strain 168).